A 110-amino-acid chain; its full sequence is Ribonuclease P protein component 1 (110 aa).

This sequence belongs to the eukaryotic/archaeal RNase P protein component 1 family. Consists of a catalytic RNA component and at least 4-5 protein subunits.

The protein localises to the cytoplasm. It catalyses the reaction Endonucleolytic cleavage of RNA, removing 5'-extranucleotides from tRNA precursor.. Functionally, part of ribonuclease P, a protein complex that generates mature tRNA molecules by cleaving their 5'-ends. This Aeropyrum pernix (strain ATCC 700893 / DSM 11879 / JCM 9820 / NBRC 100138 / K1) protein is Ribonuclease P protein component 1.